We begin with the raw amino-acid sequence, 71 residues long: Large ribosomal subunit protein uL29 (71 aa).

This sequence belongs to the universal ribosomal protein uL29 family.

The chain is Large ribosomal subunit protein uL29 from Synechococcus sp. (strain RCC307).